A 435-amino-acid chain; its full sequence is Eukaryotic peptide chain release factor subunit 1 (435 aa).

The protein belongs to the eukaryotic release factor 1 family. Heterodimer of two subunits, one of which binds GTP.

It is found in the cytoplasm. Its function is as follows. Directs the termination of nascent peptide synthesis (translation) in response to the termination codons UAA, UAG and UGA. The sequence is that of Eukaryotic peptide chain release factor subunit 1 (SU2) from Podospora anserina (Pleurage anserina).